Here is a 166-residue protein sequence, read N- to C-terminus: Protein-export protein SecB (166 aa).

Belongs to the SecB family. As to quaternary structure, homotetramer, a dimer of dimers. One homotetramer interacts with 1 SecA dimer.

Its subcellular location is the cytoplasm. Its function is as follows. One of the proteins required for the normal export of preproteins out of the cell cytoplasm. It is a molecular chaperone that binds to a subset of precursor proteins, maintaining them in a translocation-competent state. It also specifically binds to its receptor SecA. This is Protein-export protein SecB from Actinobacillus succinogenes (strain ATCC 55618 / DSM 22257 / CCUG 43843 / 130Z).